Reading from the N-terminus, the 247-residue chain is tRNA (guanine-N(7)-)-methyltransferase (247 aa).

S-adenosyl-L-methionine contacts are provided by residues glycine 70, 93 to 94 (EI), 128 to 129 (NA), and leucine 148. Aspartate 151 is a catalytic residue. An S-adenosyl-L-methionine-binding site is contributed by 226–228 (SEE).

This sequence belongs to the class I-like SAM-binding methyltransferase superfamily. TrmB family.

The protein localises to the nucleus. The catalysed reaction is guanosine(46) in tRNA + S-adenosyl-L-methionine = N(7)-methylguanosine(46) in tRNA + S-adenosyl-L-homocysteine. It participates in tRNA modification; N(7)-methylguanine-tRNA biosynthesis. Its function is as follows. Catalyzes the formation of N(7)-methylguanine at position 46 (m7G46) in tRNA. This chain is tRNA (guanine-N(7)-)-methyltransferase, found in Drosophila virilis (Fruit fly).